The chain runs to 463 residues: Probable transport protein HsrA (463 aa).

14 helical membrane-spanning segments follow: residues 10-30 (GLAW…TILN), 49-69 (MAII…AWAA), 82-102 (VFTF…ESLI), 107-127 (IQGI…IQAV), 139-159 (MATA…WLVI), 165-185 (WIFL…GSVM), 197-217 (WTGF…LDLL), 225-245 (SVTY…CGYA), 267-287 (IIAN…LPLM), 298-318 (MSGW…ILIG), 328-348 (TTLI…AWLD), 354-374 (TWII…FTSI), 393-413 (VLSI…SIIL), and 429-449 (AFSY…WSLM).

It belongs to the major facilitator superfamily. EmrB family.

The protein resides in the cell inner membrane. The chain is Probable transport protein HsrA (hsrA) from Haemophilus influenzae (strain ATCC 51907 / DSM 11121 / KW20 / Rd).